The following is a 151-amino-acid chain: Deoxyuridine 5'-triphosphate nucleotidohydrolase (151 aa).

Substrate-binding positions include 70-72, Asn83, 87-89, and Met97; these read RSG and LID.

It belongs to the dUTPase family. It depends on Mg(2+) as a cofactor.

The catalysed reaction is dUTP + H2O = dUMP + diphosphate + H(+). It functions in the pathway pyrimidine metabolism; dUMP biosynthesis; dUMP from dCTP (dUTP route): step 2/2. In terms of biological role, this enzyme is involved in nucleotide metabolism: it produces dUMP, the immediate precursor of thymidine nucleotides and it decreases the intracellular concentration of dUTP so that uracil cannot be incorporated into DNA. This Sodalis glossinidius (strain morsitans) protein is Deoxyuridine 5'-triphosphate nucleotidohydrolase.